Consider the following 594-residue polypeptide: Beta-mannosyltransferase 3 (594 aa).

Topologically, residues 1–6 (MRIRSN) are cytoplasmic. A helical membrane pass occupies residues 7–27 (VLLLSTAGALALVWFAVVFSW). Over 28-594 (DDKSIFGIPT…KDEVKDTKAK (567 aa)) the chain is Extracellular. A glycan (N-linked (GlcNAc...) asparagine) is linked at Asn-305. Positions 512 to 594 (VTRGEEDRLK…KDEVKDTKAK (83 aa)) form a coiled coil. The segment covering 517–558 (EDRLKNKEKERKIEEKRKKEEERKKKEEEKKKKEEEEKKKKE) has biased composition (basic and acidic residues). Positions 517-564 (EDRLKNKEKERKIEEKRKKEEERKKKEEEKKKKEEEEKKKKEEEEEEE) are disordered.

It belongs to the BMT family.

It is found in the membrane. Beta-mannosyltransferase involved in cell wall biosynthesis. This chain is Beta-mannosyltransferase 3 (BMT3), found in Komagataella phaffii (strain ATCC 76273 / CBS 7435 / CECT 11047 / NRRL Y-11430 / Wegner 21-1) (Yeast).